A 199-amino-acid chain; its full sequence is NAD(P)H dehydrogenase (quinone) (199 aa).

Residues 4-190 enclose the Flavodoxin-like domain; that stretch reads VLVLYYSAYG…AGARYQGRQI (187 aa). FMN contacts are provided by residues 10–15 and 78–80; these read SAYGHI and TRF. Y12 contacts NAD(+). Residue W98 participates in substrate binding. Residues 113 to 119 and H134 each bind FMN; that span reads SSATQHG.

It belongs to the WrbA family. It depends on FMN as a cofactor.

The catalysed reaction is a quinone + NADH + H(+) = a quinol + NAD(+). It carries out the reaction a quinone + NADPH + H(+) = a quinol + NADP(+). This Bradyrhizobium diazoefficiens (strain JCM 10833 / BCRC 13528 / IAM 13628 / NBRC 14792 / USDA 110) protein is NAD(P)H dehydrogenase (quinone).